Reading from the N-terminus, the 101-residue chain is Aspartyl/glutamyl-tRNA(Asn/Gln) amidotransferase subunit C (101 aa).

The protein belongs to the GatC family. In terms of assembly, heterotrimer of A, B and C subunits.

The enzyme catalyses L-glutamyl-tRNA(Gln) + L-glutamine + ATP + H2O = L-glutaminyl-tRNA(Gln) + L-glutamate + ADP + phosphate + H(+). The catalysed reaction is L-aspartyl-tRNA(Asn) + L-glutamine + ATP + H2O = L-asparaginyl-tRNA(Asn) + L-glutamate + ADP + phosphate + 2 H(+). Its function is as follows. Allows the formation of correctly charged Asn-tRNA(Asn) or Gln-tRNA(Gln) through the transamidation of misacylated Asp-tRNA(Asn) or Glu-tRNA(Gln) in organisms which lack either or both of asparaginyl-tRNA or glutaminyl-tRNA synthetases. The reaction takes place in the presence of glutamine and ATP through an activated phospho-Asp-tRNA(Asn) or phospho-Glu-tRNA(Gln). This is Aspartyl/glutamyl-tRNA(Asn/Gln) amidotransferase subunit C from Lactococcus lactis subsp. cremoris (strain SK11).